The chain runs to 302 residues: Haloalkane dehalogenase (302 aa).

Residues 48-152 (PILLMHGEPS…VVVSNTGLPI (105 aa)) form the AB hydrolase-1 domain. Catalysis depends on aspartate 123, which acts as the Nucleophile. Aspartate 249 acts as the Proton donor in catalysis. Histidine 278 serves as the catalytic Proton acceptor.

Belongs to the haloalkane dehalogenase family. Type 1 subfamily. Monomer.

It carries out the reaction 1-haloalkane + H2O = a halide anion + a primary alcohol + H(+). In terms of biological role, catalyzes hydrolytic cleavage of carbon-halogen bonds in halogenated aliphatic compounds, leading to the formation of the corresponding primary alcohols, halide ions and protons. The chain is Haloalkane dehalogenase from Caulobacter vibrioides (strain ATCC 19089 / CIP 103742 / CB 15) (Caulobacter crescentus).